We begin with the raw amino-acid sequence, 598 residues long: NADH-quinone oxidoreductase subunit C/D (598 aa).

The segment at 1–189 (MTDQIAQNSA…DPYVLTKQKE (189 aa)) is NADH dehydrogenase I subunit C. The segment at 213-598 (DFMFLNLGPN…IDFVMSDVDR (386 aa)) is NADH dehydrogenase I subunit D.

This sequence in the N-terminal section; belongs to the complex I 30 kDa subunit family. In the C-terminal section; belongs to the complex I 49 kDa subunit family. In terms of assembly, NDH-1 is composed of 13 different subunits. Subunits NuoB, CD, E, F, and G constitute the peripheral sector of the complex.

Its subcellular location is the cell inner membrane. The enzyme catalyses a quinone + NADH + 5 H(+)(in) = a quinol + NAD(+) + 4 H(+)(out). Functionally, NDH-1 shuttles electrons from NADH, via FMN and iron-sulfur (Fe-S) centers, to quinones in the respiratory chain. The immediate electron acceptor for the enzyme in this species is believed to be ubiquinone. Couples the redox reaction to proton translocation (for every two electrons transferred, four hydrogen ions are translocated across the cytoplasmic membrane), and thus conserves the redox energy in a proton gradient. The sequence is that of NADH-quinone oxidoreductase subunit C/D from Proteus mirabilis (strain HI4320).